The sequence spans 272 residues: Glutamate 5-kinase (272 aa).

Lys14 provides a ligand contact to ATP. Ser54, Asp141, and Asn157 together coordinate substrate. ATP is bound by residues 177-178 (SD) and 219-225 (TGGMLSK).

The protein belongs to the glutamate 5-kinase family.

The protein resides in the cytoplasm. The catalysed reaction is L-glutamate + ATP = L-glutamyl 5-phosphate + ADP. It participates in amino-acid biosynthesis; L-proline biosynthesis; L-glutamate 5-semialdehyde from L-glutamate: step 1/2. Functionally, catalyzes the transfer of a phosphate group to glutamate to form L-glutamate 5-phosphate. This Streptococcus pyogenes serotype M28 (strain MGAS6180) protein is Glutamate 5-kinase.